Reading from the N-terminus, the 338-residue chain is Lipoate-protein ligase A (338 aa).

Residues 29 to 216 (PATQRVLFLW…AFFAHYGERV (188 aa)) enclose the BPL/LPL catalytic domain. ATP contacts are provided by residues arginine 71, 76–79 (GAVF), and lysine 134. Lysine 134 is a binding site for (R)-lipoate.

Belongs to the LplA family. In terms of assembly, monomer.

It is found in the cytoplasm. The catalysed reaction is L-lysyl-[lipoyl-carrier protein] + (R)-lipoate + ATP = N(6)-[(R)-lipoyl]-L-lysyl-[lipoyl-carrier protein] + AMP + diphosphate + H(+). It participates in protein modification; protein lipoylation via exogenous pathway; protein N(6)-(lipoyl)lysine from lipoate: step 1/2. Its pathway is protein modification; protein lipoylation via exogenous pathway; protein N(6)-(lipoyl)lysine from lipoate: step 2/2. Catalyzes both the ATP-dependent activation of exogenously supplied lipoate to lipoyl-AMP and the transfer of the activated lipoyl onto the lipoyl domains of lipoate-dependent enzymes. This Escherichia coli O81 (strain ED1a) protein is Lipoate-protein ligase A.